The primary structure comprises 423 residues: tRNA(Ile)-lysidine synthase (423 aa).

27–32 (SGGVDS) contributes to the ATP binding site.

The protein belongs to the tRNA(Ile)-lysidine synthase family.

Its subcellular location is the cytoplasm. It carries out the reaction cytidine(34) in tRNA(Ile2) + L-lysine + ATP = lysidine(34) in tRNA(Ile2) + AMP + diphosphate + H(+). Functionally, ligates lysine onto the cytidine present at position 34 of the AUA codon-specific tRNA(Ile) that contains the anticodon CAU, in an ATP-dependent manner. Cytidine is converted to lysidine, thus changing the amino acid specificity of the tRNA from methionine to isoleucine. The sequence is that of tRNA(Ile)-lysidine synthase from Streptococcus mutans serotype c (strain ATCC 700610 / UA159).